The following is a 296-amino-acid chain: Elongation factor Ts (296 aa).

The segment at 82–85 (TDFV) is involved in Mg(2+) ion dislocation from EF-Tu.

The protein belongs to the EF-Ts family.

The protein resides in the cytoplasm. In terms of biological role, associates with the EF-Tu.GDP complex and induces the exchange of GDP to GTP. It remains bound to the aminoacyl-tRNA.EF-Tu.GTP complex up to the GTP hydrolysis stage on the ribosome. This chain is Elongation factor Ts, found in Coxiella burnetii (strain CbuG_Q212) (Coxiella burnetii (strain Q212)).